The following is a 574-amino-acid chain: Probable E3 ubiquitin-protein ligase ipaH4.5 (574 aa).

Residues 1–284 (MKPINNHSFF…YHGPQIYFSM (284 aa)) are interaction with target proteins. LRR repeat units lie at residues 63 to 82 (REPV…PLPL), 83 to 104 (HIRE…SPLL), 105 to 122 (TELH…TLPS), 123 to 143 (QLIK…SLPP), 144 to 165 (YLQS…PSTL), 166 to 183 (TILR…ELPH), 184 to 205 (RLQE…PQSL), 206 to 223 (KYLK…RLPQ), 224 to 246 (ELLA…ITLP), and 247 to 270 (ICTN…QRLT). Residues 285-292 (SDGQQNTL) are linker. Residues 293–574 (HRPLADAVTA…YRQLTDEVLA (282 aa)) are E3 ubiquitin-protein ligase catalytic domain. The NEL domain occupies 295 to 574 (PLADAVTAWF…YRQLTDEVLA (280 aa)). The active-site Glycyl thioester intermediate is the Cys379.

The protein belongs to the LRR-containing bacterial E3 ligase family. Ubiquitinated in the presence of host E1 ubiquitin-activating enzyme, E2 ubiquitin-conjugating enzyme and ubiquitin.

It is found in the secreted. The protein resides in the host cytoplasm. It carries out the reaction S-ubiquitinyl-[E2 ubiquitin-conjugating enzyme]-L-cysteine + [acceptor protein]-L-lysine = [E2 ubiquitin-conjugating enzyme]-L-cysteine + N(6)-ubiquitinyl-[acceptor protein]-L-lysine.. Its function is as follows. Effector proteins function to alter host cell physiology and promote bacterial survival in host tissues. This protein is an E3 ubiquitin ligase that interferes with host's ubiquitination pathway. This chain is Probable E3 ubiquitin-protein ligase ipaH4.5 (ipaH4.5), found in Shigella flexneri.